The chain runs to 397 residues: Elongation factor Tu (397 aa).

One can recognise a tr-type G domain in the interval 10–206 (KPHCNIGTIG…AVDEYIPQPE (197 aa)). The G1 stretch occupies residues 19–26 (GHIDHGKT). Position 19–26 (19–26 (GHIDHGKT)) interacts with GTP. Residue Thr26 coordinates Mg(2+). The tract at residues 62 to 66 (GITIS) is G2. The interval 83–86 (DCPG) is G3. GTP-binding positions include 83–87 (DCPGH) and 138–141 (NKCD). Residues 138 to 141 (NKCD) are G4. Residues 176–178 (SAF) form a G5 region.

Belongs to the TRAFAC class translation factor GTPase superfamily. Classic translation factor GTPase family. EF-Tu/EF-1A subfamily. As to quaternary structure, monomer.

The protein localises to the cytoplasm. The enzyme catalyses GTP + H2O = GDP + phosphate + H(+). Its function is as follows. GTP hydrolase that promotes the GTP-dependent binding of aminoacyl-tRNA to the A-site of ribosomes during protein biosynthesis. The sequence is that of Elongation factor Tu from Cutibacterium acnes (strain DSM 16379 / KPA171202) (Propionibacterium acnes).